Consider the following 351-residue polypeptide: Phosphoribosylformylglycinamidine cyclo-ligase (351 aa).

It belongs to the AIR synthase family.

The protein resides in the cytoplasm. The catalysed reaction is 2-formamido-N(1)-(5-O-phospho-beta-D-ribosyl)acetamidine + ATP = 5-amino-1-(5-phospho-beta-D-ribosyl)imidazole + ADP + phosphate + H(+). It participates in purine metabolism; IMP biosynthesis via de novo pathway; 5-amino-1-(5-phospho-D-ribosyl)imidazole from N(2)-formyl-N(1)-(5-phospho-D-ribosyl)glycinamide: step 2/2. In Burkholderia ambifaria (strain MC40-6), this protein is Phosphoribosylformylglycinamidine cyclo-ligase.